The chain runs to 134 residues: Interleukin-5 (134 aa).

Residues 1–19 (MRMLLHLSLLALGAAYVYA) form the signal peptide. Threonine 22 carries an O-linked (GalNAc...) threonine glycan. A glycan (N-linked (GlcNAc...) asparagine) is linked at asparagine 47.

Belongs to the IL-5 family. As to quaternary structure, homodimer; disulfide-linked. Interacts with IL5RA. Interacts with CSF2RB. As to expression, present in peripheral blood mononuclear cells.

The protein localises to the secreted. Functionally, homodimeric cytokine expressed predominantly by T-lymphocytes and NK cells that plays an important role in the survival, differentiation, and chemotaxis of eosinophils. Also acts on activated and resting B-cells to induce immunoglobulin production, growth, and differentiation. Mechanistically, exerts its biological effects through a receptor composed of IL5RA subunit and the cytokine receptor common subunit beta/CSF2RB. Binding to the receptor leads to activation of various kinases including LYN, SYK and JAK2 and thereby propagates signals through the RAS-MAPK and JAK-STAT5 pathways respectively. The polypeptide is Interleukin-5 (IL5) (Homo sapiens (Human)).